The following is a 556-amino-acid chain: Arginine--tRNA ligase 1 (556 aa).

The 'HIGH' region signature appears at 132-142; sequence ANPTGDLHLGH.

This sequence belongs to the class-I aminoacyl-tRNA synthetase family. In terms of assembly, monomer.

Its subcellular location is the cytoplasm. It carries out the reaction tRNA(Arg) + L-arginine + ATP = L-arginyl-tRNA(Arg) + AMP + diphosphate. The protein is Arginine--tRNA ligase 1 of Bacillus anthracis.